We begin with the raw amino-acid sequence, 815 residues long: Probable receptor-like protein kinase At2g39360 (815 aa).

The N-terminal stretch at M1–S26 is a signal peptide. Topologically, residues V27 to S407 are extracellular. Residues N40, N45, N125, N146, N209, N244, N277, N331, N355, N401, and N405 are each glycosylated (N-linked (GlcNAc...) asparagine). Residues V408–V428 traverse the membrane as a helical segment. Topologically, residues S429–R815 are cytoplasmic. In terms of domain architecture, Protein kinase spans F487 to M761. ATP-binding positions include I493–V501 and K515. D612 serves as the catalytic Proton acceptor.

This sequence belongs to the protein kinase superfamily. Ser/Thr protein kinase family.

The protein resides in the cell membrane. This Arabidopsis thaliana (Mouse-ear cress) protein is Probable receptor-like protein kinase At2g39360.